Here is a 4391-residue protein sequence, read N- to C-terminus: Basement membrane-specific heparan sulfate proteoglycan core protein (4391 aa).

The signal sequence occupies residues 1–21 (MGWRAAGALLLALLLHGRLLA). A glycan (O-linked (GalNAc...) threonine) is linked at Thr42. O-linked (Xyl...) (heparan sulfate) serine glycosylation is found at Ser65, Ser71, and Ser76. The 112-residue stretch at 80 to 191 (QMVYFRALVN…QGFQFRRLGT (112 aa)) folds into the SEA domain. Asn89 carries an N-linked (GlcNAc...) asparagine glycan. 4 consecutive LDL-receptor class A domains span residues 198–235 (ACTE…LNCE), 284–320 (PCGP…LDCG), 324–360 (PCEP…ANCP), and 367–404 (VCGP…FGCM). Disulfide bonds link Cys199-Cys212, Cys206-Cys225, Cys219-Cys234, Cys285-Cys297, Cys292-Cys310, Cys304-Cys319, Cys325-Cys337, Cys332-Cys350, Cys344-Cys359, Cys368-Cys381, Cys375-Cys394, and Cys388-Cys403. Residues 405-504 (PPQVVTPPRE…VLELVPQRGP (100 aa)) enclose the Ig-like C2-type 1 domain. Positions 521–530 (CFCFGITSVC) constitute a Laminin EGF-like 1; first part domain. Residues 538–730 (DQIRLRFDQP…SHGRAHSVEE (193 aa)) form the Laminin IV type A 1 domain. N-linked (GlcNAc...) asparagine glycosylation is present at Asn554. One can recognise a Laminin EGF-like 1; second part domain in the interval 731 to 763 (CRCPIGYSGLSCESCDAHFTRVPGGPYLGTCSG). Intrachain disulfides connect Cys764-Cys773, Cys766-Cys780, Cys783-Cys792, Cys795-Cys811, Cys814-Cys829, Cys816-Cys839, Cys842-Cys851, Cys854-Cys869, Cys879-Cys892, Cys894-Cys903, and Cys906-Cys921. Laminin EGF-like domains are found at residues 764-813 (CNCN…SCRP) and 814-871 (CPCP…KCRP). Residues 879 to 923 (CDERGSMGTSGEACRCKNNVVGRLCNECADGSFHLSTRNPDGCLK) enclose the Laminin EGF-like 4; truncated domain. Positions 924-933 (CFCMGVSRHC) constitute a Laminin EGF-like 5; first part domain. The region spanning 941–1125 (AQLHGASEEP…GQDPALEVEQ (185 aa)) is the Laminin IV type A 2 domain. In terms of domain architecture, Laminin EGF-like 5; second part spans 1126–1158 (CSCPPGYRGPSCQDCDTGYTRTPSGLYLGTCER). Cystine bridges form between Cys1159/Cys1168, Cys1161/Cys1175, Cys1178/Cys1187, Cys1190/Cys1206, Cys1209/Cys1224, Cys1211/Cys1234, Cys1237/Cys1246, Cys1249/Cys1263, Cys1275/Cys1287, Cys1277/Cys1293, Cys1295/Cys1304, and Cys1307/Cys1322. Laminin EGF-like domains follow at residues 1159 to 1208 (CSCH…DCQL), 1209 to 1265 (CPCY…PCQR), and 1275 to 1324 (CNCD…GCLP). One can recognise a Laminin EGF-like 9; first part domain in the interval 1325-1334 (CFCMGITQQC). In terms of domain architecture, Laminin IV type A 3 spans 1344–1529 (ISTHFAPGDF…NRPRALEVEE (186 aa)). The Laminin EGF-like 9; second part domain occupies 1530–1562 (CRCPPGYIGLSCQDCAPGYTRTGSGLYLGHCEL). 8 cysteine pairs are disulfide-bonded: Cys1563–Cys1572, Cys1565–Cys1579, Cys1582–Cys1591, Cys1594–Cys1610, Cys1613–Cys1628, Cys1615–Cys1638, Cys1641–Cys1650, and Cys1653–Cys1668. Laminin EGF-like domains lie at 1563-1612 (CECN…DCQP) and 1613-1670 (CACP…QCLP). 21 Ig-like C2-type domains span residues 1677–1771 (LVVE…SKPI), 1772–1865 (TVTV…TLSA), 1866–1955 (PVVS…GGGG), 1956–2051 (PRVQ…ASPP), 2052–2151 (PVKI…PGST), 2152–2244 (RPIR…PGPI), 2245–2340 (PPVR…AGST), 2341–2436 (QPIR…LGVT), 2437–2533 (PTVR…QGVA), 2534–2629 (YPVR…PSVS), 2630–2726 (PPIR…PGSS), 2727–2826 (MPIR…PGGA), 2827–2924 (PPIR…PGLA), 2925–3021 (QPIY…RLRS), 3022–3112 (PVIS…HGPP), 3113–3211 (TVSV…APGA), 3212–3298 (PQVQ…VESP), 3299–3399 (PYAT…AGST), 3400–3488 (PTVQ…ALPS), 3489–3574 (VLIN…LVQA), and 3575–3662 (LPQI…PERV). Asn1755 carries N-linked (GlcNAc...) asparagine glycosylation. Asn2121 is a glycosylation site (N-linked (GlcNAc...) asparagine). The segment at 2994–3014 (ASGPGPEQEASFTVTVPPSEG) is disordered. An O-linked (Xyl...) (chondroitin sulfate) serine glycan is attached at Ser2995. Polar residues predominate over residues 3003-3014 (ASFTVTVPPSEG). Residues Asn3072 and Asn3105 are each glycosylated (N-linked (GlcNAc...) asparagine). Residue Asn3279 is glycosylated (N-linked (GlcNAc...) asparagine). In terms of domain architecture, Laminin G-like 1 spans 3663–3843 (VPYFTQTPYS…DLNLTAHGIS (181 aa)). N-linked (GlcNAc...) asparagine glycosylation is found at Asn3780 and Asn3836. Disulfide bonds link Cys3819/Cys3845, Cys3848/Cys3859, Cys3853/Cys3869, Cys3871/Cys3880, Cys3888/Cys3899, Cys3893/Cys3910, and Cys3912/Cys3921. EGF-like domains are found at residues 3844–3881 (HCPT…SRCE) and 3884–3922 (QALH…LRCE). The 176-residue stretch at 3928–4103 (TTPSLSGAGS…LGSQGIGQCY (176 aa)) folds into the Laminin G-like 2 domain. Residue Ser3933 is glycosylated (O-linked (Xyl...) (chondroitin sulfate) serine). An N-linked (GlcNAc...) asparagine glycan is attached at Asn4068. Disulfide bonds link Cys4076-Cys4102, Cys4108-Cys4119, Cys4113-Cys4129, Cys4131-Cys4140, Cys4147-Cys4159, Cys4153-Cys4164, and Cys4166-Cys4175. 2 EGF-like domains span residues 4104-4141 (DSSP…DLCE) and 4143-4176 (EENP…PRCQ). The mediates motor neuron attachment stretch occupies residues 4149–4151 (LRE). O-linked (Xyl...) (chondroitin sulfate) serine glycosylation is found at Ser4179 and Ser4193. A Laminin G-like 3 domain is found at 4201–4389 (QYGAYFHDDG…AQAGANTRPC (189 aa)). Positions 4258 and 4275 each coordinate Ca(2+). Residues 4299 to 4301 (LRE) form a mediates motor neuron attachment region. The Ca(2+) site is built by Ala4325 and Asn4327. A disulfide bond links Cys4355 and Cys4389. Residues 4364-4391 (ARPGAPPPQPLDLQHRAQAGANTRPCPS) are disordered.

As to quaternary structure, has a strong tendency to aggregate in dimers or stellate structures. Interacts with other basement membrane components such as laminin, prolargin and collagen type IV. Interacts with COL13A1. Interacts with FGFBP1. Interacts with VWA1. Interacts (via C-terminus) with ECM1 (via C-terminus). Interacts with SVEP1. Post-translationally, proteolytic processing produces the C-terminal angiogenic peptide, endorepellin. This peptide can be further processed to produce the LG3 peptide. In terms of processing, O-glycosylated with core 1 or possibly core 8 glycans. Contains three heparan sulfate chains. Also contains chondroitin sulfate. Detected in cerebrospinal fluid, fibroblasts and urine (at protein level).

The protein localises to the secreted. It localises to the extracellular space. It is found in the extracellular matrix. The protein resides in the basement membrane. Functionally, integral component of basement membranes. Component of the glomerular basement membrane (GBM), responsible for the fixed negative electrostatic membrane charge, and which provides a barrier which is both size- and charge-selective. It serves as an attachment substrate for cells. Plays essential roles in vascularization. Critical for normal heart development and for regulating the vascular response to injury. Also required for avascular cartilage development. Its function is as follows. Anti-angiogenic and anti-tumor peptide that inhibits endothelial cell migration, collagen-induced endothelial tube morphogenesis and blood vessel growth in the chorioallantoic membrane. Blocks endothelial cell adhesion to fibronectin and type I collagen. Anti-tumor agent in neovascularization. Interaction with its ligand, integrin alpha2/beta1, is required for the anti-angiogenic properties. Evokes a reduction in phosphorylation of receptor tyrosine kinases via alpha2/beta1 integrin-mediated activation of the tyrosine phosphatase, PTPN6. Has anti-angiogenic properties that require binding of calcium ions for full activity. The protein is Basement membrane-specific heparan sulfate proteoglycan core protein (HSPG2) of Homo sapiens (Human).